The chain runs to 488 residues: Malonate-semialdehyde dehydrogenase (488 aa).

Residues Ala-150, Phe-152, Lys-176, Glu-179, Arg-180, Ser-229, and Thr-251 each coordinate NAD(+). Cys-284 functions as the Nucleophile in the catalytic mechanism. NAD(+) is bound at residue Glu-382.

Belongs to the aldehyde dehydrogenase family. IolA subfamily. As to quaternary structure, homotetramer.

The catalysed reaction is 3-oxopropanoate + NAD(+) + CoA + H2O = hydrogencarbonate + acetyl-CoA + NADH + H(+). The enzyme catalyses 2-methyl-3-oxopropanoate + NAD(+) + CoA + H2O = propanoyl-CoA + hydrogencarbonate + NADH + H(+). It participates in polyol metabolism; myo-inositol degradation into acetyl-CoA; acetyl-CoA from myo-inositol: step 7/7. Catalyzes the oxidation of malonate semialdehyde (MSA) and methylmalonate semialdehyde (MMSA) into acetyl-CoA and propanoyl-CoA, respectively. Is involved in a myo-inositol catabolic pathway. Bicarbonate, and not CO2, is the end-product of the enzymatic reaction. The protein is Malonate-semialdehyde dehydrogenase of Listeria monocytogenes serotype 4b (strain CLIP80459).